We begin with the raw amino-acid sequence, 316 residues long: Cuticle collagen 7 (316 aa).

Residues 1-34 form the signal peptide; that stretch reads MSSATFLSVMAGLSGIVVFGALISVFHIYSDINS. Disordered stretches follow at residues 78–269 and 281–316; these read KQSQ…DAAY and HRNVNRHRAAASKKRVVAKKRVAKKRVVAARRHVQA. Residues 79–90 show a composition bias toward polar residues; that stretch reads QSQCNCGQQASN. Triple-helical region stretches follow at residues 94–126, 139–198, and 204–263; these read GPPGPPGASGDKGHDGQPGQAGKPGQPGVAGPS, GLPG…PGKS, and GLPG…DGTP. 3 stretches are compositionally biased toward low complexity: residues 110-125, 137-147, and 177-198; these read QPGQAGKPGQPGVAGP, PQGLPGPAGVP, and AGSAGSPGQAGAPGNPGSPGKS. The segment covering 209–221 has biased composition (pro residues); it reads SGAPGPQGPPGAP. The span at 241-260 shows a compositional bias: low complexity; that stretch reads PNGQPGHPGQDGQPGAPGND.

It belongs to the cuticular collagen family. Collagen polypeptide chains are complexed within the cuticle by disulfide bonds and other types of covalent cross-links.

Its function is as follows. Nematode cuticles are composed largely of collagen-like proteins. The cuticle functions both as an exoskeleton and as a barrier to protect the worm from its environment. The sequence is that of Cuticle collagen 7 (col-7) from Caenorhabditis elegans.